The primary structure comprises 531 residues: Light-independent protochlorophyllide reductase subunit B (531 aa).

Residue Asp36 participates in [4Fe-4S] cluster binding. The active-site Proton donor is Asp291. Position 426–427 (426–427 (GL)) interacts with substrate.

Belongs to the ChlB/BchB/BchZ family. In terms of assembly, protochlorophyllide reductase is composed of three subunits; ChlL, ChlN and ChlB. Forms a heterotetramer of two ChlB and two ChlN subunits. [4Fe-4S] cluster is required as a cofactor.

The enzyme catalyses chlorophyllide a + oxidized 2[4Fe-4S]-[ferredoxin] + 2 ADP + 2 phosphate = protochlorophyllide a + reduced 2[4Fe-4S]-[ferredoxin] + 2 ATP + 2 H2O. The protein operates within porphyrin-containing compound metabolism; chlorophyll biosynthesis (light-independent). Functionally, component of the dark-operative protochlorophyllide reductase (DPOR) that uses Mg-ATP and reduced ferredoxin to reduce ring D of protochlorophyllide (Pchlide) to form chlorophyllide a (Chlide). This reaction is light-independent. The NB-protein (ChlN-ChlB) is the catalytic component of the complex. This chain is Light-independent protochlorophyllide reductase subunit B, found in Prochlorococcus marinus (strain MIT 9211).